Here is a 450-residue protein sequence, read N- to C-terminus: Bifunctional apoptosis regulator (450 aa).

Over residues 1–20 (MEEPQKNDLSMREQEEEHPV) the composition is skewed to basic and acidic residues. Residues 1–25 (MEEPQKNDLSMREQEEEHPVRSSGP) are disordered. Topologically, residues 1-140 (MEEPQKNDLS…PSTGRVNPQR (140 aa)) are cytoplasmic. The segment at 34–74 (CHCCYDTLVNPTTLNCGHSFCRHCLALWWMSSKKTECPECR) adopts an RING-type zinc-finger fold. Residues 141-161 (GGGFFSGVLTALTGVAVILLV) traverse the membrane as a helical segment. Over 162–331 (YHWRSRESEH…REPTWKQWRE (170 aa)) the chain is Extracellular. An SAM domain is found at 182-249 (WTMEEVVLWL…LTELERVRAL (68 aa)). Asparagine 232 and asparagine 308 each carry an N-linked (GlcNAc...) asparagine glycan. The helical transmembrane segment at 332–352 (FLVKYSFLPYQLIAEFAWDWL) threads the bilayer. Topologically, residues 353 to 360 (EVHYWTSR) are cytoplasmic. The helical transmembrane segment at 361 to 381 (FLIVNAVLLSVLELFSFWRIW) threads the bilayer. Residues 382–404 (SRSELKTVPQRMWSHFWKVSTQG) are Extracellular-facing. A helical transmembrane segment spans residues 405-425 (LFMAMFWPLIPQFVCNCLFYW). The Cytoplasmic portion of the chain corresponds to 426–450 (ALYFNPIINIDLVVKEVRRLETQVL).

As to quaternary structure, interacts with CASP8, BCL2 and BCL2L1 through SAM domain and also with HIP1, IFT57, ESRRBL1 and BCAP31. Interacts with NGFR; this interaction inhibits NF-kappa-B and JNK-related signaling pathways. In terms of processing, mediates RING-dependent self-ubiquitination leading to proteasomal degradation.

It localises to the endoplasmic reticulum membrane. The enzyme catalyses S-ubiquitinyl-[E2 ubiquitin-conjugating enzyme]-L-cysteine + [acceptor protein]-L-lysine = [E2 ubiquitin-conjugating enzyme]-L-cysteine + N(6)-ubiquitinyl-[acceptor protein]-L-lysine.. Functionally, membrane-bound E3 ubiquitin ligase that plays a role in several processes including apoptosis regulation or reticulum endoplasmic stress. Has anti-apoptotic activity, both for apoptosis triggered via death-receptors and via mitochondrial factors. Contributes to the dynamic control of IRE1/ERN1 signaling during ER stress by inducing BAX inhibitor 1/TMBIM6 proteasomal degradation. Promotes the activation of TGF-beta signaling by mediating the 'Lys-63'-linked ubiquitination of TGFBR1 which is critical to activate the pathway. Together with NGFR, negatively regulates NF-kappa-B and JNK-related signaling pathways. Promotes the proteasome-mediated degradation of PNPLA3, a protein involveld in lipid metabolism. In Mus musculus (Mouse), this protein is Bifunctional apoptosis regulator (Bfar).